Reading from the N-terminus, the 341-residue chain is Serpentine receptor class epsilon-8 (341 aa).

The next 7 membrane-spanning stretches (helical) occupy residues V37–I57, L64–V86, W101–F123, I143–A163, I169–I189, V235–F255, and W264–L284.

It belongs to the nematode receptor-like protein sre family.

It is found in the membrane. The sequence is that of Serpentine receptor class epsilon-8 (sre-8) from Caenorhabditis elegans.